Reading from the N-terminus, the 355-residue chain is MNELKNDRYLRALLRQPVDMTPVWMMRQAGRYLPEYKATRAIAGDFMSLCKNAELACEVTMQPLRRYPLDAAILFSDILTIPDAMGLGLYFETGEGPRFQSPITCRADVEKLPIPDPEQELGYVMNAVRTIRRELAGSVPLIGFSGSPWTLATYMVEGGSSKAFTKLKKMMYAEPQTLHLLLDKLADSVILYLNAQIKAGAQSVMIFDTWGGVLTGRDYHEFSLNYMHKIVDGLIRENEGRRVPVTLFTKGGGPWLEAMAATGCDALGLDWTTDIADARRRVGDKVALQGNMDPSVLYAPPARIEQEVSTILASFGQGEGHVFNLGHGIHQDVPPAHAGAFVNAVHALSRPYHQK.

Substrate contacts are provided by residues 27–31 (RQAGR), Asp-77, Tyr-154, Thr-209, and His-327.

The protein belongs to the uroporphyrinogen decarboxylase family. In terms of assembly, homodimer.

The protein localises to the cytoplasm. The enzyme catalyses uroporphyrinogen III + 4 H(+) = coproporphyrinogen III + 4 CO2. It participates in porphyrin-containing compound metabolism; protoporphyrin-IX biosynthesis; coproporphyrinogen-III from 5-aminolevulinate: step 4/4. Catalyzes the decarboxylation of four acetate groups of uroporphyrinogen-III to yield coproporphyrinogen-III. The chain is Uroporphyrinogen decarboxylase from Yersinia pestis bv. Antiqua (strain Antiqua).